Consider the following 537-residue polypeptide: tRNA(His) guanylyltransferase 2 (537 aa).

Positions 307, 308, and 354 each coordinate Mg(2+). Residues 307–312 (DGCHFH) and 353–354 (SD) each bind GTP.

This sequence belongs to the tRNA(His) guanylyltransferase family. Mg(2+) serves as cofactor.

Its subcellular location is the nucleus. The protein resides in the nucleoplasm. It catalyses the reaction a 5'-end ribonucleotide-tRNA(His) + GTP + ATP + H2O = a 5'-end phospho-guanosine-ribonucleotide-tRNA(His) + AMP + 2 diphosphate + H(+). Its function is as follows. Adds a GMP to the 5'-end of tRNA(His) after transcription and RNase P cleavage. This is tRNA(His) guanylyltransferase 2 (THG2) from Arabidopsis thaliana (Mouse-ear cress).